The following is a 79-amino-acid chain: Acyl carrier protein (79 aa).

A Carrier domain is found at 2-77 (ENIEQRVKKI…QAIDYVNAHL (76 aa)). The residue at position 37 (Ser-37) is an O-(pantetheine 4'-phosphoryl)serine.

It belongs to the acyl carrier protein (ACP) family. In terms of processing, 4'-phosphopantetheine is transferred from CoA to a specific serine of apo-ACP by AcpS. This modification is essential for activity because fatty acids are bound in thioester linkage to the sulfhydryl of the prosthetic group.

Its subcellular location is the cytoplasm. It participates in lipid metabolism; fatty acid biosynthesis. Carrier of the growing fatty acid chain in fatty acid biosynthesis. This chain is Acyl carrier protein, found in Azoarcus sp. (strain BH72).